A 508-amino-acid chain; its full sequence is UTP--glucose-1-phosphate uridylyltransferase (508 aa).

S13 is modified (phosphoserine). UTP contacts are provided by residues 113–116 (LNGG), K127, Q190, and G222. Residue 115–116 (GG) coordinates substrate. Mg(2+) is bound at residue K127. Substrate-binding positions include H223 and 251-253 (NID). UTP contacts are provided by D253 and K396. Residue D253 coordinates Mg(2+). Residue K396 is part of the active site. Residue T426 is modified to Phosphothreonine. The residue at position 434 (S434) is a Phosphoserine. The residue at position 438 (K438) is an N6-acetyllysine. 2 positions are modified to phosphoserine: S448 and S461. The interval 457 to 508 (HLTVSGDVTFGKNVSLKGTVIIIANHGDRIDIPPGAVLENKIVSGNLRILDH) is oligomerization. Residues 502–503 (NL) form a critical for end-to-end subunit interaction region.

This sequence belongs to the UDPGP type 1 family. In terms of assembly, homooctamer.

The protein resides in the cytoplasm. It catalyses the reaction alpha-D-glucose 1-phosphate + UTP + H(+) = UDP-alpha-D-glucose + diphosphate. The protein operates within glycan biosynthesis; glycogen biosynthesis. Its function is as follows. UTP--glucose-1-phosphate uridylyltransferase catalyzing the conversion of glucose-1-phosphate into UDP-glucose, a crucial precursor for the production of glycogen. This Mus musculus (Mouse) protein is UTP--glucose-1-phosphate uridylyltransferase (Ugp2).